The chain runs to 567 residues: Urease subunit alpha (567 aa).

The Urease domain occupies 129 to 567 (GGVDSHIHFI…LPLAQRYFLF (439 aa)). Residues His-134, His-136, and Lys-217 each contribute to the Ni(2+) site. An N6-carboxylysine modification is found at Lys-217. His-219 is a binding site for substrate. Ni(2+) contacts are provided by His-246 and His-272. His-320 serves as the catalytic Proton donor. Asp-360 serves as a coordination point for Ni(2+).

The protein belongs to the metallo-dependent hydrolases superfamily. Urease alpha subunit family. In terms of assembly, heterotrimer of UreA (gamma), UreB (beta) and UreC (alpha) subunits. Three heterotrimers associate to form the active enzyme. Ni cation is required as a cofactor. Carboxylation allows a single lysine to coordinate two nickel ions.

It localises to the cytoplasm. The catalysed reaction is urea + 2 H2O + H(+) = hydrogencarbonate + 2 NH4(+). It functions in the pathway nitrogen metabolism; urea degradation; CO(2) and NH(3) from urea (urease route): step 1/1. The protein is Urease subunit alpha of Pseudomonas putida (strain ATCC 47054 / DSM 6125 / CFBP 8728 / NCIMB 11950 / KT2440).